A 601-amino-acid polypeptide reads, in one-letter code: MPNSLAGDQVPNPTLDAIGLVDWSLRNAGTSGSTPGLEEGGTDPWTFSQLKNTDQLKEVGTASKLHQVVSGFLKACGLLGSLYFFICSLDILSSAFQLLGSKMAGDIFKDNVVLSNPVAGLVIGVVVTVLVQSSSTSSSIVVSMVASKSLTVQASVPIIMGVNVGTSITSTLVSMAQSGDRDEFQRAFGGSAVHGIFNWLTVLVLLPLENATAALERLSELALGAASLQPGGQAPDILKALTRPFTHLIIQLDSSVVTSSITSNTTNSSLIKHWCGFRGETPQGSSEECDLSGSCTERNSSASPGEDRLLCHHLFAGSELTDLAVGFILLAGSLLVLCVCLVLIVKLLNSVLRGRIAQAVKTVINADFPFPFGWLSGYLAILVGAGLTFLLQSSSVFTAAIVPLMGVGVINLERAYPLFLGSNIGTTTTALLAALASPADTLLFAVQVALIHFFFNLAGILLWYLVPVLRLPIPLAKRFGDLTAQYRWVAIVYLLLTFLLLPLAAFGLSLAGGSVLAAVGGPLVGLVLLIILVNVLQRHRPSWLPRRLQSWAWLPLWLHSLEPWDRLVTGCCPFKAYSNSHMTSKVAHCYENPQVIASQQL.

The Cytoplasmic portion of the chain corresponds to 1–75 (MPNSLAGDQV…HQVVSGFLKA (75 aa)). Residue S4 is modified to Phosphoserine. The helical transmembrane segment at 76–96 (CGLLGSLYFFICSLDILSSAF) threads the bilayer. Over 97-110 (QLLGSKMAGDIFKD) the chain is Extracellular. A helical transmembrane segment spans residues 111–131 (NVVLSNPVAGLVIGVVVTVLV). Residues 132–187 (QSSSTSSSIVVSMVASKSLTVQASVPIIMGVNVGTSITSTLVSMAQSGDRDEFQRA) are Cytoplasmic-facing. Residues 188 to 208 (FGGSAVHGIFNWLTVLVLLPL) form a helical membrane-spanning segment. The Extracellular portion of the chain corresponds to 209-324 (ENATAALERL…FAGSELTDLA (116 aa)). N-linked (GlcNAc...) asparagine glycans are attached at residues N210, N264, N267, and N299. A disulfide bond links C275 and C311. The helical transmembrane segment at 325-345 (VGFILLAGSLLVLCVCLVLIV) threads the bilayer. Over 346–369 (KLLNSVLRGRIAQAVKTVINADFP) the chain is Cytoplasmic. A helical transmembrane segment spans residues 370–390 (FPFGWLSGYLAILVGAGLTFL). At 391 to 447 (LQSSSVFTAAIVPLMGVGVINLERAYPLFLGSNIGTTTTALLAALASPADTLLFAVQ) the chain is on the extracellular side. A helical transmembrane segment spans residues 448 to 468 (VALIHFFFNLAGILLWYLVPV). Over 469 to 487 (LRLPIPLAKRFGDLTAQYR) the chain is Cytoplasmic. A helical membrane pass occupies residues 488-508 (WVAIVYLLLTFLLLPLAAFGL). Over 509–512 (SLAG) the chain is Extracellular. A helical transmembrane segment spans residues 513–533 (GSVLAAVGGPLVGLVLLIILV). The Cytoplasmic segment spans residues 534 to 601 (NVLQRHRPSW…NPQVIASQQL (68 aa)).

This sequence belongs to the SLC34A transporter family. In terms of tissue distribution, highly expressed in the kidney. Not found in any of the other tested tissues.

The protein resides in the apical cell membrane. The catalysed reaction is 2 Na(+)(out) + phosphate(out) = 2 Na(+)(in) + phosphate(in). Involved in actively transporting phosphate into cells via Na(+) cotransport in the renal brush border membrane. The cotransport has a Na(+):Pi stoichiometry of 2:1 and is electroneutral. The sequence is that of Sodium-dependent phosphate transport protein 2C (Slc34a3) from Rattus norvegicus (Rat).